The primary structure comprises 112 residues: Frizzy aggregation protein FrzB (112 aa).

Necessary for proper aggregation of cells to form fruiting bodies. FRZ genes define a system of signal transduction analogous to the enterobacterial chemotaxis systems. In Myxococcus xanthus, this protein is Frizzy aggregation protein FrzB (frzB).